Here is a 114-residue protein sequence, read N- to C-terminus: Cytochrome c oxidase subunit 7A2-like, mitochondrial (114 aa).

A mitochondrion-targeting transit peptide spans 1 to 55; sequence MYYKFSGFTQKLAGAWASDAYSPQGLRPVVSTEAPPIIFATPTKLSSGPTAYDYA. Residue K69 is modified to N6-acetyllysine. The helical transmembrane segment at 82 to 107 threads the bilayer; it reads PDQMLYRTTMALTVGGTIYCLIALYM.

Belongs to the cytochrome c oxidase VIIa family. As to quaternary structure, interacts with the mitochondrial respiratory complexes III (CIII) and IV (CIV), promoting their association.

Its subcellular location is the mitochondrion inner membrane. Assembly factor that mediates the formation of some mitochondrial respiratory supercomplexes (respirasomes), thereby promoting oxidative phosphorylation and energy metabolism. Acts as a molecular adapter that associates with both mitochondrial respiratory complexes III (CIII) and IV (CIV), promoting their association. Mediates the formation of various mitochondrial respiratory supercomplexes, such as MCIII(2)IV(2), composed of two CIII and two CIV, and the CS-respirasome (MCI(1)III(2)IV(2)), composed of one CI, two CIII and two CIV. Not involved in the formation of the canonical respirasome (MCI(1)III(2)IV(1)), composed of one CI, two CIII and one CIV. The formation of different respirasomes is important for cell adaptation to oxygen conditions and prevent metabolic exhaustion: supercomplexes mediated by COX7A2L/SCAF1 are required to maintain oxidative phosphorylation upon low oxygen conditions and promote metabolic rewiring toward glycolysis. This Bos taurus (Bovine) protein is Cytochrome c oxidase subunit 7A2-like, mitochondrial.